We begin with the raw amino-acid sequence, 270 residues long: uncharacterized protein (270 aa).

The protein localises to the cytoplasm. This is an uncharacterized protein from Schizosaccharomyces pombe (strain 972 / ATCC 24843) (Fission yeast).